The sequence spans 433 residues: Histidine--tRNA ligase (433 aa).

Belongs to the class-II aminoacyl-tRNA synthetase family. Homodimer.

Its subcellular location is the cytoplasm. It catalyses the reaction tRNA(His) + L-histidine + ATP = L-histidyl-tRNA(His) + AMP + diphosphate + H(+). This chain is Histidine--tRNA ligase, found in Pseudothermotoga lettingae (strain ATCC BAA-301 / DSM 14385 / NBRC 107922 / TMO) (Thermotoga lettingae).